Here is a 491-residue protein sequence, read N- to C-terminus: Probable protein phosphatase 2C 6 (491 aa).

Over residues 1–16 (MGLCHSKIDKTTRKET) the composition is skewed to basic and acidic residues. Residues 1-39 (MGLCHSKIDKTTRKETGATSTATTTVERQSSGRLRRPRD) form a disordered region. Residues 17 to 28 (GATSTATTTVER) show a composition bias toward low complexity. Positions 64-376 (IACLYTQQGK…DDCAVVCLFL (313 aa)) constitute a PPM-type phosphatase domain. Residues Asp-100, Gly-101, Asp-321, and Asp-367 each coordinate Mn(2+). The tract at residues 391–422 (VNHSHEESTESVTITSSKDADKKEEASTETNE) is disordered.

This sequence belongs to the PP2C family. Mg(2+) is required as a cofactor. Requires Mn(2+) as cofactor.

It catalyses the reaction O-phospho-L-seryl-[protein] + H2O = L-seryl-[protein] + phosphate. The catalysed reaction is O-phospho-L-threonyl-[protein] + H2O = L-threonyl-[protein] + phosphate. The polypeptide is Probable protein phosphatase 2C 6 (Arabidopsis thaliana (Mouse-ear cress)).